The chain runs to 491 residues: 2,3-bisphosphoglycerate-independent phosphoglycerate mutase (491 aa).

The Mn(2+) site is built by D11 and S61. Catalysis depends on S61, which acts as the Phosphoserine intermediate. Residues H118, 147 to 148 (RD), R177, R183, 247 to 250 (RNDR), and K320 contribute to the substrate site. Residues D386, H390, D427, H428, and H445 each contribute to the Mn(2+) site.

Belongs to the BPG-independent phosphoglycerate mutase family. In terms of assembly, monomer. Mn(2+) is required as a cofactor.

The catalysed reaction is (2R)-2-phosphoglycerate = (2R)-3-phosphoglycerate. It functions in the pathway carbohydrate degradation; glycolysis; pyruvate from D-glyceraldehyde 3-phosphate: step 3/5. In terms of biological role, catalyzes the interconversion of 2-phosphoglycerate and 3-phosphoglycerate. The protein is 2,3-bisphosphoglycerate-independent phosphoglycerate mutase of Helicobacter pylori (strain J99 / ATCC 700824) (Campylobacter pylori J99).